Here is a 373-residue protein sequence, read N- to C-terminus: GDP-mannose 4,6-dehydratase (373 aa).

Residues 9–14 (GVTGQD), 64–65 (DL), 86–90 (LGAMS), and Y101 each bind NADP(+). T133 is an active-site residue. Catalysis depends on nucleophile residues E135 and Y157. 3 residues coordinate NADP(+): K161, H187, and R192.

It belongs to the NAD(P)-dependent epimerase/dehydratase family. GDP-mannose 4,6-dehydratase subfamily. The cofactor is NADP(+).

The enzyme catalyses GDP-alpha-D-mannose = GDP-4-dehydro-alpha-D-rhamnose + H2O. Its pathway is nucleotide-sugar biosynthesis; GDP-L-fucose biosynthesis via de novo pathway; GDP-L-fucose from GDP-alpha-D-mannose: step 1/2. Functionally, catalyzes the conversion of GDP-D-mannose to GDP-4-dehydro-6-deoxy-D-mannose. The sequence is that of GDP-mannose 4,6-dehydratase from Escherichia coli O157:H7.